The sequence spans 372 residues: tRNA-specific 2-thiouridylase MnmA (372 aa).

ATP is bound by residues 16–23 (GMSGGVDS) and M42. The segment at 102–104 (NPD) is interaction with target base in tRNA. C107 serves as the catalytic Nucleophile. A disulfide bridge connects residues C107 and C205. Residue G132 participates in ATP binding. Residues 155–157 (KDQ) form an interaction with tRNA region. Residue C205 is the Cysteine persulfide intermediate of the active site. The interaction with tRNA stretch occupies residues 317 to 318 (RY).

It belongs to the MnmA/TRMU family.

It is found in the cytoplasm. It carries out the reaction S-sulfanyl-L-cysteinyl-[protein] + uridine(34) in tRNA + AH2 + ATP = 2-thiouridine(34) in tRNA + L-cysteinyl-[protein] + A + AMP + diphosphate + H(+). Functionally, catalyzes the 2-thiolation of uridine at the wobble position (U34) of tRNA, leading to the formation of s(2)U34. The chain is tRNA-specific 2-thiouridylase MnmA from Shewanella baltica (strain OS223).